Reading from the N-terminus, the 375-residue chain is Nucleolysin TIAR (375 aa).

RRM domains lie at 9-85 (RTLY…WATT) and 97-175 (FHVF…WATR). Residue Lys122 is modified to N6-acetyllysine. Ser201 is modified (phosphoserine). Residues 205–277 (CTVYCGGIAS…HVVKCYWGKE (73 aa)) form the RRM 3 domain. The tract at residues 345–375 (FGAQPPQGQAPPPVIPPPNQAGYGMASYQTQ) is disordered. A compositionally biased stretch (pro residues) spans 352–363 (GQAPPPVIPPPN).

As to quaternary structure, interacts with FASTK. Post-translationally, phosphorylated by MAPK14 following DNA damage, releasing TIAR from GADD45A mRNA. In terms of tissue distribution, expressed in brain, heart, kidney, lung and skeletal muscle.

The protein resides in the nucleus. Its subcellular location is the cytoplasm. It is found in the cytolytic granule. The protein localises to the stress granule. Its function is as follows. RNA-binding protein involved in alternative pre-RNA splicing and in cytoplasmic stress granules formation. Shows a preference for uridine-rich RNAs. Activates splicing of alternative exons with weak 5' splice sites followed by a U-rich stretch on its own pre-mRNA and on TIA1 mRNA. Promotes the inclusion of TIA1 exon 5 to give rise to the long isoform (isoform a) of TIA1. Acts downstream of the stress-induced phosphorylation of EIF2S1/EIF2A to promote the recruitment of untranslated mRNAs to cytoplasmic stress granules (SG). Possesses nucleolytic activity against cytotoxic lymphocyte target cells. May be involved in apoptosis. This Homo sapiens (Human) protein is Nucleolysin TIAR (TIAL1).